A 542-amino-acid chain; its full sequence is Nibrin homolog (542 aa).

The region spanning 25–90 (YKVGRKGCDI…YGTFVKTDLG (66 aa)) is the FHA domain. Positions 119–195 (IYRLSLIPLV…KTIILTNWVM (77 aa)) constitute a BRCT domain. A disordered region spans residues 409–430 (SRGHMDEKNSSDSVTIRRDRND). Residues 465–500 (VDFKRFRKGNVTCGNSFSSLIPFAKDPYKEYDSWDV) are involved in MRE11-binding.

This sequence belongs to the Nibrin family. In terms of assembly, component of the MRN complex composed of two heterodimers RAD50 and MRE11 associated with a single NBS1.

Its subcellular location is the nucleus. It localises to the chromosome. Component of the MRN complex, which plays a central role in double-strand break (DSB) repair, DNA recombination, maintenance of telomere integrity and meiosis. The MRN complex is involved in the repair of DNA double-strand breaks (DSBs) via homologous recombination (HR), an error-free mechanism which primarily occurs during S and G2 phases. The complex (1) mediates the end resection of damaged DNA, which generates proper single-stranded DNA, a key initial steps in HR, and is (2) required for the recruitment of other repair factors and efficient activation of ATM and ATR upon DNA damage. The MRN complex possesses single-strand endonuclease activity and double-strand-specific 3'-5' exonuclease activity, which are provided by MRE11, to initiate end resection, which is required for single-strand invasion and recombination. Within the MRN complex, NBS1 acts as a protein-protein adapter, which specifically recognizes and binds phosphorylated proteins, promoting their recruitment to DNA damage sites. Recruits MRE11 and RAD50 components of the MRN complex to DSBs in response to DNA damage. The chain is Nibrin homolog from Arabidopsis thaliana (Mouse-ear cress).